The following is a 390-amino-acid chain: Endothelial cell-selective adhesion molecule (390 aa).

An N-terminal signal peptide occupies residues 1 to 29; that stretch reads MISLPGPLVTNLLRFLFLGLSALAPPSRA. An Ig-like V-type domain is found at 30–143; it reads ELQLHLPANQ…NGQASGHSIK (114 aa). At 30 to 248 the chain is on the extracellular side; sequence ELQLHLPANQ…LEVSTGPGAA (219 aa). N-linked (GlcNAc...) asparagine glycans are attached at residues asparagine 108, asparagine 169, asparagine 213, and asparagine 236. The Ig-like C2-type domain occupies 156-242; the sequence is PSCRLQGVPR…AQCNVTLEVS (87 aa). Residues cysteine 174 and cysteine 224 are joined by a disulfide bond. Residues 249–269 traverse the membrane as a helical segment; that stretch reads VVAGAVVGTLVGLGLLAGLVL. Residues 270 to 390 are Cytoplasmic-facing; it reads LYHRRGKALE…PAQSQAGSLV (121 aa). Serine 301 carries the phosphoserine modification. Residues 316 to 365 form a disordered region; the sequence is ARALRPPHGPPRPGALTPTPSLSSQALPSPRLPTTDGANPQPISLIPGGV. Phosphothreonine occurs at positions 332 and 334. Residues 333-342 are compositionally biased toward polar residues; the sequence is PTPSLSSQAL. Serine 336, serine 339, serine 344, and serine 371 each carry phosphoserine.

In terms of assembly, interacts with MAGI1.

Its subcellular location is the cell junction. It localises to the adherens junction. The protein localises to the tight junction. It is found in the cell membrane. In terms of biological role, can mediate aggregation most likely through a homophilic molecular interaction. The polypeptide is Endothelial cell-selective adhesion molecule (ESAM) (Macaca fascicularis (Crab-eating macaque)).